Here is a 343-residue protein sequence, read N- to C-terminus: MSLKHFLNTQDWSRAELDALLTQAALFKRNKLGSELKGKSIALVFFNPSMRTRTSFELGAFQLGGHAVVLQPGKDAWPIEFNLGTVMDGDTEEHIAEVARVLGRYVDLIGVRAFPKFVDWSKDREDQVLKSFAKYSPVPVINMETITHPCQELAHALALQEHFGTQDLRGKKYVLTWTYHPKPLNTAVANSALTIATRMGMDVTLLCPTPDYILDQRYMDWAAQNVVESGGSLQVSHDIDSAYAGADVVYAKSWGALPFFGNWEPEKPIRDQYQHFIVDERKMALTNNGVFSHCLPLRRNVKATDAVMDSPNCIAIDEAENRLHVQKAIMAALASQAGIGNRE.

Carbamoyl phosphate contacts are provided by residues 49–52 (SMRT), Trp-77, and Arg-112. Glu-144 provides a ligand contact to N(2)-acetyl-L-ornithine. 148-151 (HPCQ) contributes to the carbamoyl phosphate binding site. Residues Lys-252 and Leu-295 each coordinate N(2)-acetyl-L-ornithine. Position 294 to 295 (294 to 295 (CL)) interacts with carbamoyl phosphate. Lys-302 is modified (N6-carboxylysine). Carbamoyl phosphate is bound at residue Arg-322.

This sequence belongs to the aspartate/ornithine carbamoyltransferase superfamily. AOTCase family. Homotrimer.

The protein resides in the cytoplasm. The catalysed reaction is N(2)-acetyl-L-ornithine + carbamoyl phosphate = N(2)-acetyl-L-citrulline + phosphate + H(+). It functions in the pathway amino-acid biosynthesis; L-arginine biosynthesis. Its activity is regulated as follows. Carboxylation at Lys-302 increases the catalytic activity of the enzyme. Functionally, catalyzes the transfer of the carbamoyl group from carbamoyl phosphate to the delta-amino group of N(2)-acetyl-L-ornithine to produce N(2)-acetyl-L-citrulline. This is a step in an alternative arginine biosynthesis pathway. The enzyme has no activity with ornithine. In Xanthomonas axonopodis pv. citri (strain 306), this protein is N-acetylornithine carbamoyltransferase.